The sequence spans 259 residues: Ras-related protein Rab-34 (259 aa).

At Met1 the chain carries N-acetylmethionine. GTP is bound by residues Ser62, Val63, Gly64, Lys65, Thr66, Asp78, Tyr81, and Thr84. Position 66 (Thr66) interacts with Mg(2+). The short motif at 71 to 89 (RFCKDTFDKNYKATIGVDF) is the Switch 1 element. Residues Thr84 and Asp107 each coordinate Mg(2+). The Switch 2 motif lies at 108-127 (TAGQERFKCIASTYYRGAQA). The GTP site is built by Gly110, Lys167, Asp169, and Ser198. Residue Ser241 is modified to Phosphoserine. 2 S-geranylgeranyl cysteine lipidation sites follow: Cys257 and Cys258.

The protein belongs to the small GTPase superfamily. Rab family. Interacts with RILP. The GTP-bound form interacts with REP15. Requires Mg(2+) as cofactor.

It localises to the cytoplasm. Its subcellular location is the golgi apparatus. The protein resides in the cytoplasmic vesicle. The protein localises to the phagosome. It is found in the phagosome membrane. It localises to the cell projection. Its subcellular location is the cilium. The protein resides in the cytoskeleton. The protein localises to the microtubule organizing center. It is found in the centrosome. It localises to the centriole. It carries out the reaction GTP + H2O = GDP + phosphate + H(+). With respect to regulation, regulated by guanine nucleotide exchange factors (GEFs) which promote the exchange of bound GDP for free GTP. Regulated by GTPase activating proteins (GAPs) which increase the GTP hydrolysis activity. Inhibited by GDP dissociation inhibitors (GDIs). In terms of biological role, the small GTPases Rab are key regulators of intracellular membrane trafficking, from the formation of transport vesicles to their fusion with membranes. Rabs cycle between an inactive GDP-bound form and an active GTP-bound form that is able to recruit to membranes different sets of downstream effectors directly responsible for vesicle formation, movement, tethering and fusion. RAB34 transports protein involved in the redistribution of lysosomes to the peri-Golgi region. Plays a role in the maturation of phagosomes that engulf pathogens, such as S.aureus and M.tuberculosis. Plays a role in the fusion of phagosomes with lysosomes. Required for the early steps of intracellular ciliogenesis, the cilium assembly pathway initiated by trafficking and docking of ciliary vesicles to the centrioles in the cytoplasm, followed by axoneme formation in the cytoplasm. After axoneme elongation, the centrioles migrate close to the cell surface so that ciliary vesicles can fuse with the plasma membrane to expose cilia to the extracellular space. It seems dispensable for ciliogenesis via the extracellular pathway where cilium assembly begins after migration and docking of the centriole to the plasma membrane. Also acts as a positive regulator of hedgehog signaling and regulates ciliary function. The sequence is that of Ras-related protein Rab-34 from Mus musculus (Mouse).